We begin with the raw amino-acid sequence, 245 residues long: uncharacterized protein (245 aa).

This is an uncharacterized protein from Acanthamoeba polyphaga (Amoeba).